A 264-amino-acid polypeptide reads, in one-letter code: Thymidylate synthase (264 aa).

R21 is a binding site for dUMP. H51 lines the (6R)-5,10-methylene-5,6,7,8-tetrahydrofolate pocket. 126–127 serves as a coordination point for dUMP; sequence RR. C146 serves as the catalytic Nucleophile. Residues 166–169, N177, and 207–209 each bind dUMP; these read RSVD and HLY. A (6R)-5,10-methylene-5,6,7,8-tetrahydrofolate-binding site is contributed by D169. A263 contributes to the (6R)-5,10-methylene-5,6,7,8-tetrahydrofolate binding site.

The protein belongs to the thymidylate synthase family. Bacterial-type ThyA subfamily. Homodimer.

Its subcellular location is the cytoplasm. The enzyme catalyses dUMP + (6R)-5,10-methylene-5,6,7,8-tetrahydrofolate = 7,8-dihydrofolate + dTMP. Its pathway is pyrimidine metabolism; dTTP biosynthesis. Catalyzes the reductive methylation of 2'-deoxyuridine-5'-monophosphate (dUMP) to 2'-deoxythymidine-5'-monophosphate (dTMP) while utilizing 5,10-methylenetetrahydrofolate (mTHF) as the methyl donor and reductant in the reaction, yielding dihydrofolate (DHF) as a by-product. This enzymatic reaction provides an intracellular de novo source of dTMP, an essential precursor for DNA biosynthesis. The protein is Thymidylate synthase of Geobacillus kaustophilus (strain HTA426).